We begin with the raw amino-acid sequence, 119 residues long: Methylglyoxal synthase (119 aa).

The MGS-like domain occupies 1-119; the sequence is MRIALIAHDK…GTADLIIRQF (119 aa). Substrate contacts are provided by residues histidine 8, lysine 12, 34–37, and 54–55; these read TGTT and SG. Aspartate 60 acts as the Proton donor/acceptor in catalysis. Histidine 87 is a substrate binding site.

Belongs to the methylglyoxal synthase family.

It catalyses the reaction dihydroxyacetone phosphate = methylglyoxal + phosphate. In terms of biological role, catalyzes the formation of methylglyoxal from dihydroxyacetone phosphate. In Clostridium botulinum (strain Alaska E43 / Type E3), this protein is Methylglyoxal synthase.